The sequence spans 249 residues: ATP synthase subunit a (249 aa).

6 helical membrane-spanning segments follow: residues Ala-29–Ser-49, Phe-84–Phe-104, Ile-114–Tyr-134, Phe-140–Ile-160, Phe-193–Ile-213, and Val-216–Leu-236.

The protein belongs to the ATPase A chain family. F-type ATPases have 2 components, CF(1) - the catalytic core - and CF(0) - the membrane proton channel. CF(1) has five subunits: alpha(3), beta(3), gamma(1), delta(1), epsilon(1). CF(0) has three main subunits: a(1), b(2) and c(9-12). The alpha and beta chains form an alternating ring which encloses part of the gamma chain. CF(1) is attached to CF(0) by a central stalk formed by the gamma and epsilon chains, while a peripheral stalk is formed by the delta and b chains.

The protein localises to the cell inner membrane. Key component of the proton channel; it plays a direct role in the translocation of protons across the membrane. The sequence is that of ATP synthase subunit a from Agrobacterium fabrum (strain C58 / ATCC 33970) (Agrobacterium tumefaciens (strain C58)).